The primary structure comprises 152 residues: SsrA-binding protein (152 aa).

Belongs to the SmpB family.

Its subcellular location is the cytoplasm. In terms of biological role, required for rescue of stalled ribosomes mediated by trans-translation. Binds to transfer-messenger RNA (tmRNA), required for stable association of tmRNA with ribosomes. tmRNA and SmpB together mimic tRNA shape, replacing the anticodon stem-loop with SmpB. tmRNA is encoded by the ssrA gene; the 2 termini fold to resemble tRNA(Ala) and it encodes a 'tag peptide', a short internal open reading frame. During trans-translation Ala-aminoacylated tmRNA acts like a tRNA, entering the A-site of stalled ribosomes, displacing the stalled mRNA. The ribosome then switches to translate the ORF on the tmRNA; the nascent peptide is terminated with the 'tag peptide' encoded by the tmRNA and targeted for degradation. The ribosome is freed to recommence translation, which seems to be the essential function of trans-translation. This Rickettsia typhi (strain ATCC VR-144 / Wilmington) protein is SsrA-binding protein.